Reading from the N-terminus, the 213-residue chain is Putative transmembrane protein DDB_G0267860 (213 aa).

The signal sequence occupies residues 1-22; sequence MKTKILLLNFIIIFFLINVNLA. The Extracellular segment spans residues 23–191; it reads IKKDSPFKEI…SSKFDSSTSS (169 aa). N-linked (GlcNAc...) asparagine glycosylation is found at asparagine 92 and asparagine 114. A helical membrane pass occupies residues 192 to 212; the sequence is ISINTLAILSLLFLIFINKLI. Asparagine 213 is a topological domain (cytoplasmic).

It is found in the membrane. This is Putative transmembrane protein DDB_G0267860 from Dictyostelium discoideum (Social amoeba).